Reading from the N-terminus, the 125-residue chain is Transmembrane protein 14EP (125 aa).

The next 2 helical transmembrane spans lie at 9–29 (VPLY…GISG) and 81–101 (ILTL…LIVS).

The protein belongs to the TMEM14 family.

It is found in the membrane. The protein is Transmembrane protein 14EP (TMEM14EP) of Homo sapiens (Human).